Reading from the N-terminus, the 228-residue chain is Small ribosomal subunit protein uS3 (228 aa).

In terms of domain architecture, KH type-2 spans 39–107 (IRKELNEKLK…PVNINIEEIK (69 aa)).

This sequence belongs to the universal ribosomal protein uS3 family. Part of the 30S ribosomal subunit. Forms a tight complex with proteins S10 and S14.

Functionally, binds the lower part of the 30S subunit head. Binds mRNA in the 70S ribosome, positioning it for translation. This is Small ribosomal subunit protein uS3 from Hydrogenovibrio crunogenus (strain DSM 25203 / XCL-2) (Thiomicrospira crunogena).